A 160-amino-acid chain; its full sequence is Cytochrome c-type biogenesis protein CcmE (160 aa).

At 1–8 (MNPRRKKR) the chain is on the cytoplasmic side. The helical; Signal-anchor for type II membrane protein transmembrane segment at 9 to 29 (LGIILAIFFGISATVGLMVYA) threads the bilayer. At 30 to 160 (LNQNMDLFYT…TTEQKEGNAQ (131 aa)) the chain is on the periplasmic side. Heme is bound by residues H128 and Y132.

This sequence belongs to the CcmE/CycJ family.

Its subcellular location is the cell inner membrane. Heme chaperone required for the biogenesis of c-type cytochromes. Transiently binds heme delivered by CcmC and transfers the heme to apo-cytochromes in a process facilitated by CcmF and CcmH. This Vibrio atlanticus (strain LGP32) (Vibrio splendidus (strain Mel32)) protein is Cytochrome c-type biogenesis protein CcmE.